Here is a 1595-residue protein sequence, read N- to C-terminus: A disintegrin and metalloproteinase with thrombospondin motifs 7 (1595 aa).

Residues 1 to 20 form the signal peptide; it reads MHRGLNLLLILCALAPHVLG. Residues 21–217 constitute a propeptide that is removed on maturation; sequence PASGLPTEGR…QRQQKRRQQR (197 aa). Asparagine 84 and asparagine 105 each carry an N-linked (GlcNAc...) asparagine glycan. Positions 165 to 218 are disordered; sequence PGHAQPHMVYKHKRSGQQDDSRTSGTCGVQGSPELKHQREHWEQRQQKRRQQRS. Residues 189–196 carry the Cysteine switch motif; the sequence is GTCGVQGS. A Zn(2+)-binding site is contributed by cysteine 191. Residues 198 to 210 show a composition bias toward basic and acidic residues; it reads ELKHQREHWEQRQ. Positions 223–434 constitute a Peptidase M12B domain; the sequence is KWVETLVVAD…GWGLCLDDRP (212 aa). Cystine bridges form between cysteine 299/cysteine 353, cysteine 328/cysteine 335, cysteine 347/cysteine 429, cysteine 386/cysteine 413, cysteine 456/cysteine 479, cysteine 467/cysteine 485, cysteine 474/cysteine 504, cysteine 498/cysteine 509, cysteine 532/cysteine 569, cysteine 536/cysteine 574, and cysteine 547/cysteine 559. Residue histidine 369 participates in Zn(2+) binding. Glutamate 370 is an active-site residue. Zn(2+) is bound by residues histidine 373 and histidine 379. One can recognise a Disintegrin domain in the interval 444–519; the sequence is VLPGVLYDVN…VPEGFQPETV (76 aa). The 56-residue stretch at 520 to 575 folds into the TSP type-1 1 domain; sequence DGGWSGWSAWSVCSRSCGVGVRSSERQCTQPVPKNKGKYCVGERKRYRLCNLQACP. The N-linked (GlcNAc...) asparagine glycan is linked to asparagine 619. The spacer stretch occupies residues 680–791; it reads HTVSRTFKEA…PGVHYKYTIQ (112 aa). TSP type-1 domains lie at 801–860, 861–917, and 922–975; these read PEFS…EPCP, ARWW…IPCY, and CPSS…QPCQ. Disordered stretches follow at residues 989–1035, 1077–1121, 1179–1234, and 1255–1315; these read GSSS…LDPP, PPHI…SHSP, REDT…LSPD, and KPVH…APTD. Composition is skewed to pro residues over residues 1005–1015 and 1079–1089; these read QPVPRPSPASS and HIRPTEPPSDS. Residues 1220–1232 show a composition bias toward low complexity; that stretch reads SSPSNSTTQASLS. Residues 1268 to 1280 show a composition bias toward polar residues; sequence QIQTPHTEGTQSP. 4 consecutive TSP type-1 domains span residues 1320-1368, 1371-1431, 1433-1476, and 1478-1538; these read KNAS…RHCH, PCAA…QPCL, WYTS…PCNT, and PCTQ…EDCE. The PLAC domain maps to 1541 to 1581; sequence EPSRCERDRLPFNFCETLRLLGRCQLPTIRAQCCRSCPPLS.

As to quaternary structure, interacts with COMP. Requires Zn(2+) as cofactor. Glycosylated. Can be O-fucosylated by POFUT2 on a serine or a threonine residue found within the consensus sequence C1-X(2)-(S/T)-C2-G of the TSP type-1 repeat domains where C1 and C2 are the first and second cysteine residue of the repeat, respectively. Fucosylated repeats can then be further glycosylated by the addition of a beta-1,3-glucose residue by the glucosyltransferase, B3GALTL. Fucosylation mediates the efficient secretion of ADAMTS family members. Can also be C-glycosylated with one or two mannose molecules on tryptophan residues within the consensus sequence W-X-X-W of the TPRs. N- and C-glycosylations can also facilitate secretion. Post-translationally, O-glycosylated proteoglycan; contains chondroitin sulfate. In terms of processing, may be cleaved by a furin endopeptidase. The precursor is sequentially processed. Detected in liver, ovary, kidney, testicle, lung and embryo.

It localises to the secreted. It is found in the extracellular space. Its subcellular location is the extracellular matrix. Metalloprotease. Was previously shown to degrade COMP. However, a later study found no activity against COMP. This is A disintegrin and metalloproteinase with thrombospondin motifs 7 (Adamts7) from Rattus norvegicus (Rat).